Reading from the N-terminus, the 354-residue chain is UDP-3-O-acylglucosamine N-acyltransferase (354 aa).

The active-site Proton acceptor is the histidine 247.

It belongs to the transferase hexapeptide repeat family. LpxD subfamily. Homotrimer.

It carries out the reaction a UDP-3-O-[(3R)-3-hydroxyacyl]-alpha-D-glucosamine + a (3R)-hydroxyacyl-[ACP] = a UDP-2-N,3-O-bis[(3R)-3-hydroxyacyl]-alpha-D-glucosamine + holo-[ACP] + H(+). Its pathway is bacterial outer membrane biogenesis; LPS lipid A biosynthesis. In terms of biological role, catalyzes the N-acylation of UDP-3-O-acylglucosamine using 3-hydroxyacyl-ACP as the acyl donor. Is involved in the biosynthesis of lipid A, a phosphorylated glycolipid that anchors the lipopolysaccharide to the outer membrane of the cell. The protein is UDP-3-O-acylglucosamine N-acyltransferase of Chlamydia trachomatis serovar A (strain ATCC VR-571B / DSM 19440 / HAR-13).